Consider the following 391-residue polypeptide: N-acetylaspartylglutamate synthase A (391 aa).

The 186-residue stretch at 115 to 300 (FQELAGHGVP…VGGIIADYTM (186 aa)) folds into the ATP-grasp domain. Residues lysine 154, 189–199 (QKYVKESHGKD), and arginine 215 each bind ATP. Positions 260, 273, and 275 each coordinate Mg(2+). Mn(2+) contacts are provided by aspartate 260, glutamate 273, and asparagine 275. Serine 319 carries the post-translational modification Phosphoserine. Polar residues predominate over residues 341-350 (TINSGSTSSE). Positions 341-379 (TINSGSTSSESEPELGEIRDSSASTMGAPPSMLPEPGYN) are disordered.

The protein belongs to the RimK family. The cofactor is Mg(2+). Requires Mn(2+) as cofactor.

The protein localises to the cytoplasm. The catalysed reaction is N-acetyl-L-aspartate + L-glutamate + ATP = N-acetyl-L-aspartyl-L-glutamate + ADP + phosphate + H(+). The enzyme catalyses N-acetyl-L-aspartate + 2 L-glutamate + 2 ATP = N-acetyl-L-aspartyl-L-glutamyl-L-glutamate + 2 ADP + 2 phosphate + 2 H(+). Its function is as follows. Catalyzes the synthesis of N-acetyl-L-aspartyl-L-glutamate (NAAG) and N-acetyl-L-aspartyl-L-glutamyl-L-glutamate. This chain is N-acetylaspartylglutamate synthase A (RIMKLA), found in Homo sapiens (Human).